Reading from the N-terminus, the 533-residue chain is Probable bifunctional tRNA threonylcarbamoyladenosine biosynthesis protein (533 aa).

The segment at 1–328 (MRILGIEGTA…FRPDAVTVTW (328 aa)) is kae1. The Fe cation site is built by His-112 and His-116. Residues 133 to 137 (NASGA), Asp-165, Gly-178, Glu-182, and Asn-261 each bind L-threonylcarbamoyladenylate. Asp-289 contacts Fe cation. The Protein kinase domain maps to 339–533 (PATLDKTPVR…RDIESRGRYH (195 aa)). Residues 347 to 354 (VRGAEAIV) and Lys-363 each bind ATP. Asp-452 serves as the catalytic Proton acceptor; for kinase activity.

In the N-terminal section; belongs to the KAE1 / TsaD family. This sequence in the C-terminal section; belongs to the protein kinase superfamily. Tyr protein kinase family. BUD32 subfamily. As to quaternary structure, component of the KEOPS complex that consists of Kae1, Bud32, Cgi121 and Pcc1; the whole complex dimerizes. Fe(2+) is required as a cofactor.

It is found in the cytoplasm. The catalysed reaction is L-seryl-[protein] + ATP = O-phospho-L-seryl-[protein] + ADP + H(+). It catalyses the reaction L-threonyl-[protein] + ATP = O-phospho-L-threonyl-[protein] + ADP + H(+). It carries out the reaction L-threonylcarbamoyladenylate + adenosine(37) in tRNA = N(6)-L-threonylcarbamoyladenosine(37) in tRNA + AMP + H(+). Its function is as follows. Required for the formation of a threonylcarbamoyl group on adenosine at position 37 (t(6)A37) in tRNAs that read codons beginning with adenine. Is a component of the KEOPS complex that is probably involved in the transfer of the threonylcarbamoyl moiety of threonylcarbamoyl-AMP (TC-AMP) to the N6 group of A37. The Kae1 domain likely plays a direct catalytic role in this reaction. The Bud32 domain probably displays kinase activity that regulates Kae1 function. The protein is Probable bifunctional tRNA threonylcarbamoyladenosine biosynthesis protein of Haloquadratum walsbyi (strain DSM 16790 / HBSQ001).